A 368-amino-acid polypeptide reads, in one-letter code: Phospho-N-acetylmuramoyl-pentapeptide-transferase (368 aa).

The next 9 helical transmembrane spans lie at 30-50 (AAAI…IRYL), 72-92 (LPTM…FLWA), 98-118 (HVWL…IDDY), 139-159 (ISLG…AVLL), 170-190 (LSID…TAVS), 201-221 (GLAS…SYLA), 238-258 (GGEI…FLWF), 264-286 (EIIM…ALLI), and 345-365 (KIVI…LMTL).

Belongs to the glycosyltransferase 4 family. MraY subfamily. Requires Mg(2+) as cofactor.

It is found in the cell inner membrane. The catalysed reaction is UDP-N-acetyl-alpha-D-muramoyl-L-alanyl-gamma-D-glutamyl-meso-2,6-diaminopimeloyl-D-alanyl-D-alanine + di-trans,octa-cis-undecaprenyl phosphate = di-trans,octa-cis-undecaprenyl diphospho-N-acetyl-alpha-D-muramoyl-L-alanyl-D-glutamyl-meso-2,6-diaminopimeloyl-D-alanyl-D-alanine + UMP. It participates in cell wall biogenesis; peptidoglycan biosynthesis. Catalyzes the initial step of the lipid cycle reactions in the biosynthesis of the cell wall peptidoglycan: transfers peptidoglycan precursor phospho-MurNAc-pentapeptide from UDP-MurNAc-pentapeptide onto the lipid carrier undecaprenyl phosphate, yielding undecaprenyl-pyrophosphoryl-MurNAc-pentapeptide, known as lipid I. This chain is Phospho-N-acetylmuramoyl-pentapeptide-transferase, found in Chlorobium phaeobacteroides (strain DSM 266 / SMG 266 / 2430).